The following is a 172-amino-acid chain: Small ribosomal subunit protein uS5 (172 aa).

The S5 DRBM domain occupies 11 to 74 (LSEVLVDVNR…QAAKKRMMKV (64 aa)).

Belongs to the universal ribosomal protein uS5 family. As to quaternary structure, part of the 30S ribosomal subunit. Contacts proteins S4 and S8.

In terms of biological role, with S4 and S12 plays an important role in translational accuracy. Its function is as follows. Located at the back of the 30S subunit body where it stabilizes the conformation of the head with respect to the body. The chain is Small ribosomal subunit protein uS5 from Rickettsia canadensis (strain McKiel).